The chain runs to 414 residues: uncharacterized protein (414 aa).

The tract at residues 204-230 (LVGTPAPGPNGSNSDGDSERASQDVRD) is disordered. Over residues 220 to 230 (DSERASQDVRD) the composition is skewed to basic and acidic residues.

The protein belongs to the CdaR family.

This is an uncharacterized protein from Mycobacterium tuberculosis (strain CDC 1551 / Oshkosh).